The following is an 880-amino-acid chain: Zinc-responsive transcriptional regulator ZAP1 (880 aa).

2 disordered regions span residues 1–26 (MDAL…AASA) and 140–164 (NNFH…PRRK). Over residues 17–26 (ATSAATAASA) the composition is skewed to low complexity. The segment covering 147–158 (SDPTSPQQNSKS) has biased composition (polar residues). A phosphoserine mark is found at Ser156 and Ser166. A zinc-responsive domain 1 (ZRD(AD1)) region spans residues 182 to 502 (KPNPPPGSDD…LTNNDLNDLI (321 aa)). Positions 207–402 (HPKSEANIKQ…YEVPFGKHIN (196 aa)) are transcription activation domain 1 (AD1). Disordered stretches follow at residues 436–482 (NRCN…VNNS) and 510–555 (RFRN…PSSI). A compositionally biased stretch (low complexity) spans 442-456 (NNLNGSNNNTAGATS). Residues 460–474 (QHHHHRIQFHSHKPN) show a composition bias toward basic residues. Residue Ser515 is modified to Phosphoserine. Positions 545–555 (SSLEDSLPSSI) are enriched in low complexity. A C2H2-type 1 zinc finger spans residues 579-604 (LKCKWKECPESCSSLFDLQRHLLKDH). Positions 579–641 (LKCKWKECPE…SIVNHINCQH (63 aa)) are zinc-responsive domain 2 (ZRD(AD2)). The Zn(2+) site is built by Cys581, Cys586, His599, His604, Cys618, Cys623, His636, and His641. The transcription activation domain 2 (AD2) stretch occupies residues 611 to 640 (HPMEPLACNWEDCDFLGDDTCSIVNHINCQ). The C2H2-type 2; atypical zinc-finger motif lies at 616 to 641 (LACNWEDCDFLGDDTCSIVNHINCQH). 5 consecutive C2H2-type zinc fingers follow at residues 705–730 (VICQ…EAVH), 738–762 (YQCL…LKVH), 768–790 (YKCK…TRTH), 796–818 (YKCH…IRTH), and 824–846 (LQCK…IKTH). Residues 705–846 (VICQWDGCNK…SNLSKHIKTH (142 aa)) constitute a DNA-binding region (DNA-binding domain).

Its subcellular location is the nucleus. With respect to regulation, active in zinc-limited cells and repressed in replete cells. Zinc controls ZAP1 DNA binding activity. Its function is as follows. Transcription regulator controlling zinc-responsive gene expression. Binds to zinc-responsive elements (ZREs) (consensus sequence 5'-ACCYYNAAGGT-3') in the promoter of target genes. Recruits SWI/SNF, SAGA, and Mediator complexes as coactivators in a zinc-responsive manner. Involved in zinc ion homeostasis by zinc-responsive transcriptional regulation of the zinc uptake system genes ZTR1 and ZTR2. Positively regulates ETR1 expression, affecting mitochondrial function. This is Zinc-responsive transcriptional regulator ZAP1 (ZAP1) from Saccharomyces cerevisiae (strain ATCC 204508 / S288c) (Baker's yeast).